Here is a 508-residue protein sequence, read N- to C-terminus: Cobyric acid synthase (508 aa).

A GATase cobBQ-type domain is found at E249–F451. Catalysis depends on C330, which acts as the Nucleophile. Residue H443 is part of the active site.

It belongs to the CobB/CobQ family. CobQ subfamily.

It functions in the pathway cofactor biosynthesis; adenosylcobalamin biosynthesis. Catalyzes amidations at positions B, D, E, and G on adenosylcobyrinic A,C-diamide. NH(2) groups are provided by glutamine, and one molecule of ATP is hydrogenolyzed for each amidation. In Caldanaerobacter subterraneus subsp. tengcongensis (strain DSM 15242 / JCM 11007 / NBRC 100824 / MB4) (Thermoanaerobacter tengcongensis), this protein is Cobyric acid synthase.